The chain runs to 335 residues: MGFGDFDFLCNKSPLPLCMLVGPYDKPTTDQTPLLNGIGLMSECYPRSIELANTIIFQVGNTFIHIGALPVILIMMYTVKGKYTAIGRKELFHFLSCFLFLTCMSLVVDAGVAPPGSAAYPYLVAIQNGAISGTMWSLVNFGFLGFQFYEDGTRRAMLFLRGTTLCAFLLTFIISLFTFIPSWGSDAIGPHNTVGLFVVLYLFNLIFVVVYILSQFALAIFILQDIWMIGAVALGTFFFVASQILLYPISSIICKQVKHYIDGTFFATVTNLFAVMMVYKFWDMSTKEDLEFSVGQKDNMWETKELLGEDNGMSRYEVNGSEYAGSTFALNQHQF.

The next 7 helical transmembrane spans lie at 55–75 (IIFQ…ILIM), 92–112 (FHFL…DAGV), 129–149 (GAIS…FQFY), 164–184 (TLCA…PSWG), 193–213 (TVGL…VYIL), 220–240 (IFIL…FFFV), and 259–279 (HYID…MMVY).

This sequence belongs to the CHS7 family. Interacts with CHS3.

It is found in the endoplasmic reticulum membrane. Functionally, chaperone required for the export of the chitin synthase CHS3 from the endoplasmic reticulum. The chain is Chitin synthase export chaperone (CHS7) from Yarrowia lipolytica (strain CLIB 122 / E 150) (Yeast).